We begin with the raw amino-acid sequence, 114 residues long: MITRNYETLYIIRPDVGEEQLEQTISQFRTFLEEQGATKLKVQNRGKRRFAYPIKKLREGYYILMTYTAPGTAIAPLERAMRLNENILRFMTIVLEEETETEDAEEENPVLARA.

It belongs to the bacterial ribosomal protein bS6 family.

Functionally, binds together with bS18 to 16S ribosomal RNA. The protein is Small ribosomal subunit protein bS6 of Thermosynechococcus vestitus (strain NIES-2133 / IAM M-273 / BP-1).